The primary structure comprises 283 residues: Phosphatidylserine decarboxylase proenzyme (283 aa).

Residues Asp-90, His-143, and Ser-248 each act as charge relay system; for autoendoproteolytic cleavage activity in the active site. Ser-248 functions as the Schiff-base intermediate with substrate; via pyruvic acid; for decarboxylase activity in the catalytic mechanism. Ser-248 carries the pyruvic acid (Ser); by autocatalysis modification.

It belongs to the phosphatidylserine decarboxylase family. PSD-B subfamily. Prokaryotic type I sub-subfamily. As to quaternary structure, heterodimer of a large membrane-associated beta subunit and a small pyruvoyl-containing alpha subunit. Pyruvate is required as a cofactor. Post-translationally, is synthesized initially as an inactive proenzyme. Formation of the active enzyme involves a self-maturation process in which the active site pyruvoyl group is generated from an internal serine residue via an autocatalytic post-translational modification. Two non-identical subunits are generated from the proenzyme in this reaction, and the pyruvate is formed at the N-terminus of the alpha chain, which is derived from the carboxyl end of the proenzyme. The autoendoproteolytic cleavage occurs by a canonical serine protease mechanism, in which the side chain hydroxyl group of the serine supplies its oxygen atom to form the C-terminus of the beta chain, while the remainder of the serine residue undergoes an oxidative deamination to produce ammonia and the pyruvoyl prosthetic group on the alpha chain. During this reaction, the Ser that is part of the protease active site of the proenzyme becomes the pyruvoyl prosthetic group, which constitutes an essential element of the active site of the mature decarboxylase.

The protein resides in the cell membrane. It catalyses the reaction a 1,2-diacyl-sn-glycero-3-phospho-L-serine + H(+) = a 1,2-diacyl-sn-glycero-3-phosphoethanolamine + CO2. It participates in phospholipid metabolism; phosphatidylethanolamine biosynthesis; phosphatidylethanolamine from CDP-diacylglycerol: step 2/2. Functionally, catalyzes the formation of phosphatidylethanolamine (PtdEtn) from phosphatidylserine (PtdSer). This chain is Phosphatidylserine decarboxylase proenzyme, found in Francisella tularensis subsp. novicida (strain U112).